We begin with the raw amino-acid sequence, 977 residues long: Alanine--tRNA ligase (977 aa).

The disordered stretch occupies residues 512–535 (SQVDSKLQSSTPAGTGSYDSKQVS). The Zn(2+) site is built by H618, H622, C720, and H724.

This sequence belongs to the class-II aminoacyl-tRNA synthetase family. Zn(2+) serves as cofactor.

It is found in the cytoplasm. It catalyses the reaction tRNA(Ala) + L-alanine + ATP = L-alanyl-tRNA(Ala) + AMP + diphosphate. In terms of biological role, catalyzes the attachment of alanine to tRNA(Ala) in a two-step reaction: alanine is first activated by ATP to form Ala-AMP and then transferred to the acceptor end of tRNA(Ala). Also edits incorrectly charged Ser-tRNA(Ala) and Gly-tRNA(Ala) via its editing domain. This Leptospira interrogans serogroup Icterohaemorrhagiae serovar Lai (strain 56601) protein is Alanine--tRNA ligase.